The following is a 387-amino-acid chain: Phosphoglycerate kinase (387 aa).

Residues 21–23 (DLN), R36, 59–62 (HLGR), R113, and R146 contribute to the substrate site. Residues K197, E314, and 340–343 (GGDT) contribute to the ATP site.

The protein belongs to the phosphoglycerate kinase family. In terms of assembly, monomer.

The protein resides in the cytoplasm. It carries out the reaction (2R)-3-phosphoglycerate + ATP = (2R)-3-phospho-glyceroyl phosphate + ADP. The protein operates within carbohydrate degradation; glycolysis; pyruvate from D-glyceraldehyde 3-phosphate: step 2/5. The sequence is that of Phosphoglycerate kinase from Alcanivorax borkumensis (strain ATCC 700651 / DSM 11573 / NCIMB 13689 / SK2).